Reading from the N-terminus, the 927-residue chain is Band 3 anion transport protein (927 aa).

The residue at position 1 (methionine 1) is an N-acetylmethionine. The Cytoplasmic portion of the chain corresponds to 1-420; it reads MGDMQDHEKV…LSDITDALSP (420 aa). At serine 18 the chain carries Phosphoserine. Residues tyrosine 31 and tyrosine 56 each carry the phosphotyrosine modification. The globular stretch occupies residues 69–303; the sequence is SQVYVELQEL…LGRAAATLMT (235 aa). The tract at residues 190 to 199 is interaction with ANK1; the sequence is AVLTRSGAPS. A phosphoserine mark is found at serine 199 and serine 222. The segment at 317-370 is dimerization arm; that stretch reads RGELLSSLDSFLDCSLVLPPTEAPSEKALLNLVPVQKELLRKRYLPRPAKPDPN. The tract at residues 367–390 is disordered; sequence PDPNLYEALDGGKEGPGDEDDPLR. Position 372 is a phosphotyrosine (tyrosine 372). Residues 421-444 traverse the membrane as a helical segment; it reads QVLAAVIFIYFAALSPAVTFGGLL. At 445-452 the chain is on the extracellular side; it reads GEKTRNLM. Residues 453-473 traverse the membrane as a helical segment; the sequence is GVSELLISTAVQGILFALLGA. Over 474–476 the chain is Cytoplasmic; sequence QPL. Residues 477 to 493 traverse the membrane as a discontinuously helical segment; that stretch reads LVLGFSGPLLVFEEAFY. At 494-502 the chain is on the extracellular side; that stretch reads SFCESNNLE. Residues 503–523 form a helical membrane-spanning segment; the sequence is YIVGRAWIGFWLILLVVLVVA. Over 524-535 the chain is Cytoplasmic; it reads FEGSFLVQYISR. Residues 536–558 form a helical membrane-spanning segment; the sequence is YTQEIFSFLISLIFIYETFSKLI. Over 559-586 the chain is Extracellular; it reads KIFQDYPLQESYAPVVMKPKPQGPVPNT. The chain crosses the membrane as a helical span at residues 587–607; it reads ALLSLVLMVGTFLLAMMLRKF. Topologically, residues 608–618 are cytoplasmic; that stretch reads KNSTYFPGKLR. A helical membrane pass occupies residues 619–639; sequence RVIGDFGVPISILIMVLVDTF. At 640–679 the chain is on the extracellular side; sequence IKNTYTQKLSVPDGLKVSNSSARGWVIHPLGLYNHFPKWM. Asparagine 658 is a glycosylation site (N-linked (GlcNAc...) asparagine). The helical transmembrane segment at 680-700 threads the bilayer; it reads MFASVLPALLVFILIFLESQI. Topologically, residues 701–716 are cytoplasmic; it reads TTLIVSKPERKMIKGS. A helical transmembrane segment spans residues 717-735; that stretch reads GFHLDLLLVVGMGGVAALF. A discontinuously helical transmembrane segment spans residues 736-753; it reads GMPWLSATTVRSVTHANA. Residues 754 to 776 are Cytoplasmic-facing; it reads LTVMGKASGPGAAAQIQEVKEQR. The next 2 membrane-spanning stretches (helical) occupy residues 777-797 and 798-816; these read ISGL…PILS and RIPL…ITSL. Topologically, residues 817–854 are cytoplasmic; it reads SGIQLFDRILLLFKPPKYHPDVPFVKRVKTWRMHLFTG. Positions 855–885 form an intramembrane region, discontinuously helical; the sequence is IQIICLAVLWVVKSTPASLALPFVLILTVPL. A lipid anchor (S-palmitoyl cysteine) is attached at cysteine 859. At 886–927 the chain is on the cytoplasmic side; the sequence is RRLLLPLIFRELELQCLDGDDAKVTFDEAEGLDEYDEVPMPV. Tyrosine 920 carries the phosphotyrosine modification.

This sequence belongs to the anion exchanger (TC 2.A.31) family. In terms of assembly, a dimer in solution, but in its membrane environment, it exists primarily as a mixture of dimers and tetramers and spans the membrane asymmetrically. Component of the ankyrin-1 complex in the erythrocyte, composed of ANK1, RHCE, RHAG, SLC4A1, EPB42, GYPA, GYPB and AQP1. Interacts with STOM; this interaction positively regulates SLC4A1 activity. Interacts with GYPA; a GYPA monomer is bound at each end of the SLC4A1 dimer forming a heterotetramer. Three SLC4A1 dimers (Band 3-I, Band 3-II and Band 3-III) participates in the ankyrin-1 complex. Interacts (via the cytoplasmic domain) with EPB42; this interaction is mediated by the SLC4A1 Band 3-I dimer. Interacts (via the cytoplasmic domain) directly with ANK1; this interaction is mediated by the SLC4A1 Band 3-II and Band 3-III dimers. Interacts with TMEM139. As to expression, kidney.

Its subcellular location is the cell membrane. It is found in the basolateral cell membrane. The catalysed reaction is hydrogencarbonate(in) + chloride(out) = hydrogencarbonate(out) + chloride(in). Functionally, functions both as a transporter that mediates electroneutral anion exchange across the cell membrane and as a structural protein. Component of the ankyrin-1 complex of the erythrocyte membrane; required for normal flexibility and stability of the erythrocyte membrane and for normal erythrocyte shape via the interactions of its cytoplasmic domain with cytoskeletal proteins, glycolytic enzymes, and hemoglobin. Functions as a transporter that mediates the 1:1 exchange of inorganic anions across the erythrocyte membrane. Mediates chloride-bicarbonate exchange in the kidney, and is required for normal acidification of the urine. This chain is Band 3 anion transport protein, found in Rattus norvegicus (Rat).